A 620-amino-acid polypeptide reads, in one-letter code: Chaperone protein HscA homolog (620 aa).

The protein belongs to the heat shock protein 70 family.

In terms of biological role, chaperone involved in the maturation of iron-sulfur cluster-containing proteins. Has a low intrinsic ATPase activity which is markedly stimulated by HscB. The polypeptide is Chaperone protein HscA homolog (Pseudomonas putida (strain ATCC 47054 / DSM 6125 / CFBP 8728 / NCIMB 11950 / KT2440)).